The primary structure comprises 151 residues: Sec-independent protein translocase protein TatB (151 aa).

The chain crosses the membrane as a helical span at residues 1 to 21 (MFDVSFTELMVIGVIALVVIG). The disordered stretch occupies residues 66 to 151 (MDETARSMQT…DKTPPTGSAT (86 aa)). A compositionally biased stretch (basic and acidic residues) spans 93–103 (AELDDTARDAS). Low complexity-rich tracts occupy residues 109–122 (ADAP…VASD) and 133–151 (APPA…GSAT).

This sequence belongs to the TatB family. In terms of assembly, the Tat system comprises two distinct complexes: a TatABC complex, containing multiple copies of TatA, TatB and TatC subunits, and a separate TatA complex, containing only TatA subunits. Substrates initially bind to the TatABC complex, which probably triggers association of the separate TatA complex to form the active translocon.

The protein localises to the cell inner membrane. Part of the twin-arginine translocation (Tat) system that transports large folded proteins containing a characteristic twin-arginine motif in their signal peptide across membranes. Together with TatC, TatB is part of a receptor directly interacting with Tat signal peptides. TatB may form an oligomeric binding site that transiently accommodates folded Tat precursor proteins before their translocation. The chain is Sec-independent protein translocase protein TatB from Bordetella parapertussis (strain 12822 / ATCC BAA-587 / NCTC 13253).